Consider the following 125-residue polypeptide: Ribonuclease P protein component (125 aa).

Belongs to the RnpA family. Consists of a catalytic RNA component (M1 or rnpB) and a protein subunit.

It carries out the reaction Endonucleolytic cleavage of RNA, removing 5'-extranucleotides from tRNA precursor.. Functionally, RNaseP catalyzes the removal of the 5'-leader sequence from pre-tRNA to produce the mature 5'-terminus. It can also cleave other RNA substrates such as 4.5S RNA. The protein component plays an auxiliary but essential role in vivo by binding to the 5'-leader sequence and broadening the substrate specificity of the ribozyme. In Clostridium botulinum (strain Alaska E43 / Type E3), this protein is Ribonuclease P protein component.